The following is a 113-amino-acid chain: DNA-binding protein Mevan_1162 (113 aa).

Basic and acidic residues predominate over residues Met-1 to Gln-12. A disordered region spans residues Met-1–Glu-22.

Belongs to the PDCD5 family.

The polypeptide is DNA-binding protein Mevan_1162 (Methanococcus vannielii (strain ATCC 35089 / DSM 1224 / JCM 13029 / OCM 148 / SB)).